The chain runs to 7094 residues: Replicase polyprotein 1ab (7094 aa).

Positions 54 to 196 (PENHVMVDCR…PWVMYLRKCG (143 aa)) constitute a CoV Nsp1 globular domain. Residues 216-246 (FKVEDAYDLVHDEPKGKFSKKAYALIRGYRG) enclose the BetaCoV Nsp1 C-terminal domain. Positions 250 to 519 (LLYVDQYGCD…LICKALYLDY (270 aa)) constitute a CoV Nsp2 N-terminal domain. Cysteine 392, cysteine 397, cysteine 413, and cysteine 416 together coordinate Zn(2+). The segment at 392 to 416 (CEQDLCDFKGWVPGNMIDGFACTTC) is C4. Residues 524–713 (CGNLHQRELL…AQAFRSVAKV (190 aa)) enclose the CoV Nsp2 middle domain. Positions 733-851 (RRRICLSGSK…LDQAWRVPCA (119 aa)) constitute a CoV Nsp2 C-terminal domain. The Ubiquitin-like 1 domain maps to 853–966 (RCVTFKEQPT…LYCAFTAPED (114 aa)). Positions 972–986 (ESGVEEDDVEGEETD) are enriched in acidic residues. Residues 972–992 (ESGVEEDDVEGEETDLTVTSA) form a disordered region. Residues 1036–1274 (DLESVIQDYE…IAQLYGSCIT (239 aa)) enclose the Peptidase C16 1 domain. Cysteine 1074 functions as the For PL1-PRO activity in the catalytic mechanism. Residues cysteine 1151, cysteine 1154, cysteine 1177, and cysteine 1179 each contribute to the Zn(2+) site. The C4-type 1 zinc finger occupies 1151-1179 (CIKCDLALKLKGLDAMFFYGDVVSHVCKC). Residues histidine 1225 and aspartate 1236 each act as for PL1-PRO activity in the active site. Residues 1275–1435 (PNVCFVKGDI…LISKCQITAV (161 aa)) form the Macro domain. In terms of domain architecture, DPUP spans 1491–1563 (DDARTFVQSN…VAQIKALFLD (73 aa)). Positions 1562 to 1617 (LDKVDILLTVDGVNFTNRFVPVGESFGKSLGNVFCDGVNVTKHKCDINYKGKVFFQ) constitute a Ubiquitin-like 2 domain. The Peptidase C16 2 domain occupies 1631–1892 (SSFNFDQKEL…KIEYKPDLSQ (262 aa)). Cysteine 1671 serves as the catalytic For PL2-PRO activity. 4 residues coordinate Zn(2+): cysteine 1749, cysteine 1751, cysteine 1783, and cysteine 1785. The C4-type 2 zinc finger occupies 1749–1785 (CKCGVKQEQRTGVDAVMHFGTLSREDLEIGYTVDCSC). Catalysis depends on for PL2-PRO activity residues histidine 1828 and aspartate 1842. In terms of domain architecture, Nucleic acid-binding spans 1906 to 2007 (IKAQFKTFEK…TYFNRPLLVD (102 aa)). In terms of domain architecture, G2M spans 2020-2169 (DDGGDISESD…ADNKVIYTTE (150 aa)). Transmembrane regions (helical) follow at residues 2138 to 2158 (ISACFNFIKWLFVLLFGWIKI), 2199 to 2219 (ACIIATIFLLWFNFIYANVIF), and 2221 to 2241 (DFYLPKIGFLPTFVGKIAQWI). Residues 2138–2385 (ISACFNFIKW…ASFIKLFSLF (248 aa)) form an HD1 region. Residues 2235 to 2296 (GKIAQWIKNT…AIDVVQYEAD (62 aa)) form the 3Ecto domain. 2 cysteine pairs are disulfide-bonded: cysteine 2251/cysteine 2275 and cysteine 2266/cysteine 2272. 3 helical membrane passes run 2313–2333 (LIVSYALYTAWFYPLFALISI), 2343–2363 (LFMLSTLHWSVRLLVSLANML), and 2365–2385 (AHVFMRFYIIIASFIKLFSLF). Positions 2383–2473 (SLFRHVAYGC…ELKRPIQPTD (91 aa)) are Y1. The CoV Nsp3 Y domain maps to 2383–2750 (SLFRHVAYGC…LTTPFSLKGG (368 aa)). Zn(2+)-binding residues include histidine 2387, cysteine 2392, cysteine 2397, cysteine 2400, cysteine 2433, histidine 2436, cysteine 2440, and cysteine 2443. Residues 2387–2400 (HVAYGCSKSGCLFC) are ZF1. Residues 2433 to 2443 (CSKHQWNCIDC) form a ZF2 region. Residues 2474–2566 (VAYHTVTDVK…MVDKNLITTA (93 aa)) form a Y2 region. The interval 2474 to 2750 (VAYHTVTDVK…LTTPFSLKGG (277 aa)) is coV-Y. A Y3 region spans residues 2567–2649 (NTGTSVTETM…DSVMSAVSAG (83 aa)). Residues 2650–2750 (LELTDESCNN…LTTPFSLKGG (101 aa)) form a Y4 region. Helical transmembrane passes span 2752-2772 (VFSYFVYVCFVLSLVCFIGLW), 3031-3051 (ASSIAGAILAVIVVLVFYYLI), 3063-3083 (IVFVNVIVWCVNFMMLFVFQV), 3090-3110 (VYAICYFYATLYFPSEISVIM), and 3115-3135 (LVMYGTIMPLWFCLLYISVVV). The tract at residues 2752–3135 (VFSYFVYVCF…FCLLYISVVV (384 aa)) is HD2. The Nsp4C domain maps to 3149–3246 (LGTSVRSDGT…TASVSTSFLQ (98 aa)). The Peptidase C30 domain occupies 3247–3549 (SGIVKMVNPT…YQQLAGIKLQ (303 aa)). Residues histidine 3287 and cysteine 3391 each act as for 3CL-PRO activity in the active site. 7 helical membrane-spanning segments follow: residues 3558–3578 (GIVCWIMASTFLFSCIITAFV), 3588–3608 (TNMLSITFCALCVISLTMLLV), 3615–3635 (LTMYIIPVLFTLLYNNYLVVY), 3657–3677 (TYTDEVIYGMLLLIGMVFVTL), 3684–3704 (LFSFIMFVGRVISVVSLWYMG), 3711–3731 (ILLMLASLFGTYTWTTALSMA), and 3755–3775 (IVLVCYLFIGYIISCYWGLFS). The tract at residues 3558-3775 (GIVCWIMAST…IISCYWGLFS (218 aa)) is HD3. The RdRp Nsp7 cofactor domain occupies 3837-3925 (SKLTDVKCAN…DYAKDNTVLQ (89 aa)). Residues 3926-4122 (ALQSEFVNMA…HNEVSATALQ (197 aa)) form the RdRp Nsp8 cofactor domain. The region spanning 4123-4232 (NNELMPAKLK…GTISSTVRLQ (110 aa)) is the Nsp9 ssRNA-binding domain. The ExoN/MTase coactivator domain occupies 4233-4370 (AGTATEYASN…CVSTDTTVQS (138 aa)). Zn(2+) is bound by residues cysteine 4306, cysteine 4309, histidine 4315, cysteine 4322, cysteine 4348, cysteine 4351, cysteine 4359, and cysteine 4361. 2 zinc fingers span residues 4306-4322 (CIYCRARVEHPDVDGLC) and 4348-4361 (CQVCGFWRDGSCSC). The NiRAN domain occupies 4375 to 4630 (FLNRVRGTSV…DCELYVNNAY (256 aa)). Residues asparagine 4578 and aspartate 4587 each contribute to the Mn(2+) site. The Nsp12 Interface domain maps to 4631–4729 (RLFDLVQYDF…MNMDVDTHRY (99 aa)). Positions 4660, 4666, 4671, 4675, and 4852 each coordinate Zn(2+). The region spanning 4730–5297 (RLSLKDLLLY…NMYLRSAVMQ (568 aa)) is the Nsp12 RNA-dependent RNA polymerase domain. Residues 4732-4946 (SLKDLLLYAA…HQKCLKSIAA (215 aa)) form a rdRp Fingers N-ter region. Residues 4947–4985 (TRGVPVVIGTTKFYGGWDDMLRRLIKDVDNPVLMGWDYP) form a rdRp Palm N-ter region. A RdRp catalytic domain is found at 4977–5139 (PVLMGWDYPK…CYNSDYASKG (163 aa)). Positions 4986-5044 (KCDRAMPNILRIVSSLVLARKHEACCSQSDRFYRLANEYAQVLSEIVMCGGCYYVKPGG) are rdRp Fingers C-ter. Positions 5007, 5010, and 5011 each coordinate Zn(2+). Residues 5045–5180 (TSSGDATTAF…NNGPHEFCSQ (136 aa)) form a rdRp Palm C-ter region. Residues serine 5124, aspartate 5125, and aspartate 5126 contribute to the active site. The interval 5181–5297 (HTMLVKMDGD…NMYLRSAVMQ (117 aa)) is rdRp Thumb. The region spanning 5298-5410 (SVGACVVCSS…DDFNRIASCK (113 aa)) is the CV ZBD domain. Cysteine 5302, cysteine 5305, cysteine 5313, cysteine 5316, cysteine 5323, cysteine 5326, histidine 5330, histidine 5336, cysteine 5347, cysteine 5352, cysteine 5369, and histidine 5372 together coordinate Zn(2+). The (+)RNA virus helicase ATP-binding domain maps to 5553 to 5734 (SVLETFQNNV…MCCLGPDIFL (182 aa)). 5578 to 5585 (GPPGTGKS) is an ATP binding site. The (+)RNA virus helicase C-terminal domain maps to 5735 to 5904 (GTCYRCPKEI…VETRVQCSTN (170 aa)). An ExoN domain is found at 5971–6186 (LFITKEEAVK…RCLAVYDCFC (216 aa)). Active-site residues include aspartate 5989, glutamate 5991, and glutamate 6090. Zn(2+) is bound by residues cysteine 6106, cysteine 6109, cysteine 6125, histidine 6128, histidine 6156, cysteine 6160, and histidine 6163. Catalysis depends on residues histidine 6167 and aspartate 6172. Cysteine 6178 lines the Zn(2+) pocket. In terms of domain architecture, N7-MTase spans 6195-6421 (YPIISNELSI…NLWNTFTKLQ (227 aa)). 6230–6236 (DIGNPKA) provides a ligand contact to S-adenosyl-L-methionine. Residues 6308 to 6322 (CNGGSLYVNKHAFHT) form a gpppA-binding region. Residues cysteine 6346, cysteine 6367, cysteine 6378, and histidine 6381 each coordinate Zn(2+). A Nsp15 N-terminal oligomerization domain is found at 6422–6482 (SLENVVYNLV…NVAVELFAKR (61 aa)). The AV-Nsp11N/CoV-Nsp15M domain maps to 6483-6603 (SIRHHPELKL…FAVRKEGQDV (121 aa)). The NendoU domain maps to 6653–6792 (TCRTDMEKDF…NDEKVMTFYL (140 aa)). Active-site residues include histidine 6683, histidine 6698, lysine 6738, lysine 6841, aspartate 6925, lysine 6965, and glutamate 6998. The region spanning 6797–7091 (ASDWKPGYSM…KEVFVGDSMV (295 aa)) is the Nidovirus-type SAM-dependent 2'-O-MTase domain.

The protein belongs to the coronaviruses polyprotein 1ab family. Interacts with host PHB and PHB2. In terms of assembly, interacts with papain-like protease nsp3 and non-structural protein 6. As to quaternary structure, monomer. Homodimer. Only the homodimer shows catalytic activity. Interacts with nsp8 and nsp12 to form the replication-transcription complex (RTC): nsp12, nsp7, two subunits of nsp8, and up to two subunits of nsp13. In terms of assembly, interacts with nsp7, nsp13 and nsp12 to form the replication-transcription complex (RTC): nsp12, nsp7, two subunits of nsp8, and up to two subunits of nsp13. As to quaternary structure, interacts with nsp12. Interacts with proofreading exoribonuclease nsp14 and 2'-O-methyltransferase nsp16; these interactions enhance nsp14 and nsp16 enzymatic activities. In terms of assembly, interacts with nsp7 and nsp8 to form the replication-transcription complex (RTC): nsp12, nsp7, two subunits of nsp8, and up to two subunits of nsp13. Interacts with nsp9. As to quaternary structure, interacts with nsp8 to form the replication-transcription complex (RTC): nsp12, nsp7, two subunits of nsp8, and up to two subunits of nsp13. The cofactor is Mn(2+). Requires Mg(2+) as cofactor. Post-translationally, specific enzymatic cleavages in vivo by its own proteases yield mature proteins. 3CL-PRO and PL-PRO proteinases are autocatalytically processed.

Its subcellular location is the host membrane. The protein localises to the host cytoplasm. The protein resides in the host perinuclear region. It localises to the host endoplasmic reticulum-Golgi intermediate compartment. The catalysed reaction is RNA(n) + a ribonucleoside 5'-triphosphate = RNA(n+1) + diphosphate. It catalyses the reaction ATP + H2O = ADP + phosphate + H(+). The enzyme catalyses Thiol-dependent hydrolysis of ester, thioester, amide, peptide and isopeptide bonds formed by the C-terminal Gly of ubiquitin (a 76-residue protein attached to proteins as an intracellular targeting signal).. It carries out the reaction a 5'-end (N(7)-methyl 5'-triphosphoguanosine)-ribonucleoside in mRNA + S-adenosyl-L-methionine = a 5'-end (N(7)-methyl 5'-triphosphoguanosine)-(2'-O-methyl-ribonucleoside) in mRNA + S-adenosyl-L-homocysteine + H(+). The catalysed reaction is uridylyl-uridylyl-ribonucleotide-RNA = a 3'-end uridylyl-2',3'-cyclophospho-uridine-RNA + a 5'-end dephospho-ribonucleoside-RNA. It catalyses the reaction a 5'-end diphospho-ribonucleoside in mRNA + GTP + H(+) = a 5'-end (5'-triphosphoguanosine)-ribonucleoside in mRNA + diphosphate. The enzyme catalyses a 5'-end (5'-triphosphoguanosine)-ribonucleoside in mRNA + S-adenosyl-L-methionine = a 5'-end (N(7)-methyl 5'-triphosphoguanosine)-ribonucleoside in mRNA + S-adenosyl-L-homocysteine. Functionally, the replicase polyprotein of coronaviruses is a multifunctional protein: it contains the activities necessary for the transcription of negative stranded RNA, leader RNA, subgenomic mRNAs and progeny virion RNA as well as proteinases responsible for the cleavage of the polyprotein into functional products. Inhibits host translation by interacting with the 40S ribosomal subunit. The nsp1-40S ribosome complex further induces an endonucleolytic cleavage near the 5'UTR of host mRNAs, targeting them for degradation. Viral mRNAs are not susceptible to nsp1-mediated endonucleolytic RNA cleavage thanks to the presence of a 5'-end leader sequence and are therefore protected from degradation. By suppressing host gene expression, nsp1 facilitates efficient viral gene expression in infected cells and evasion from host immune response. Its function is as follows. May play a role in the modulation of host cell survival signaling pathway by interacting with host PHB and PHB2. Indeed, these two proteins play a role in maintaining the functional integrity of the mitochondria and protecting cells from various stresses. In terms of biological role, responsible for the cleavages located at the N-terminus of the replicase polyprotein. In addition, PL-PRO possesses a deubiquitinating/deISGylating activity and processes both 'Lys-48'- and 'Lys-63'-linked polyubiquitin chains from cellular substrates. Participates together with nsp4 in the assembly of virally-induced cytoplasmic double-membrane vesicles necessary for viral replication. Antagonizes innate immune induction of type I interferon by blocking the phosphorylation, dimerization and subsequent nuclear translocation of host IRF3. Also prevents host NF-kappa-B signaling. Functionally, participates in the assembly of virally-induced cytoplasmic double-membrane vesicles necessary for viral replication. Cleaves the C-terminus of replicase polyprotein at 11 sites. Recognizes substrates containing the core sequence [ILMVF]-Q-|-[SGACN]. Also able to bind an ADP-ribose-1''-phosphate (ADRP). Its function is as follows. Plays a role in the initial induction of autophagosomes from host endoplasmic reticulum. Later, limits the expansion of these phagosomes that are no longer able to deliver viral components to lysosomes. In terms of biological role, forms a hexadecamer with nsp8 (8 subunits of each) that may participate in viral replication by acting as a primase. Alternatively, may synthesize substantially longer products than oligonucleotide primers. Functionally, forms a hexadecamer with nsp7 (8 subunits of each) that may participate in viral replication by acting as a primase. Alternatively, may synthesize substantially longer products than oligonucleotide primers. Forms a primer, NSP9-pU, which is utilized by the polymerase for the initiation of RNA chains. Interacts with ribosome signal recognition particle RNA (SRP). Together with NSP8, suppress protein integration into the cell membrane, thereby disrupting host immune defenses. Its function is as follows. Plays a pivotal role in viral transcription by stimulating both nsp14 3'-5' exoribonuclease and nsp16 2'-O-methyltransferase activities. Therefore plays an essential role in viral mRNAs cap methylation. In terms of biological role, RNA-directed RNA polymerase that catalyzes the transcription of viral genomic and subgenomic RNAs. Acts in complex with nsp7 and nsp8 to transcribe both the minus and positive strands of genomic RNA. The kinase-like NiRAN domain of NSP12 attaches one or more nucleotides to the amino terminus of NSP9, forming a covalent RNA-protein intermediate that serves as transcription/replication primer. Subgenomic RNAs (sgRNAs) are formed by discontinuous transcription: The polymerase has the ability to pause at transcription-regulating sequences (TRS) and jump to the leader TRS, resulting in a major deletion. This creates a series of subgenomic RNAs that are replicated, transcribed and translated. In addition, Nsp12 is a subunit of the viral RNA capping enzyme that catalyzes the RNA guanylyltransferase reaction for genomic and sub-genomic RNAs. Subsequently, the NiRAN domain transfers RNA to GDP, and forms the core cap structure GpppA-RNA. Functionally, multi-functional protein with a zinc-binding domain in N-terminus displaying RNA and DNA duplex-unwinding activities with 5' to 3' polarity. Activity of helicase is dependent on magnesium. Plays a role in viral RNA synthesis through two distinct activities. The N7-guanine methyltransferase activity plays a role in the formation of the cap structure GpppA-RNA. The proofreading exoribonuclease reduces the sensitivity of the virus to RNA mutagens during replication. This activity acts on both ssRNA and dsRNA in a 3'-5' direction. Its function is as follows. Plays a role in viral transcription/replication and prevents the simultaneous activation of host cell dsRNA sensors, such as MDA5/IFIH1, OAS, and PKR. Acts by degrading the 5'-polyuridines generated during replication of the poly(A) region of viral genomic and subgenomic RNAs. Catalyzes a two-step reaction in which a 2'3'-cyclic phosphate (2'3'-cP) is first generated by 2'-O transesterification, which is then hydrolyzed to a 3'-phosphate (3'-P). If not degraded, poly(U) RNA would hybridize with poly(A) RNA tails and activate host dsRNA sensors. In terms of biological role, methyltransferase that mediates mRNA cap 2'-O-ribose methylation to the 5'-cap structure of viral mRNAs. N7-methyl guanosine cap is a prerequisite for binding of nsp16. Therefore plays an essential role in viral mRNAs cap methylation which is essential to evade immune system. This chain is Replicase polyprotein 1ab (rep), found in Bos taurus (Bovine).